Here is a 118-residue protein sequence, read N- to C-terminus: UPF0342 protein BCE_0953 (118 aa).

The protein belongs to the UPF0342 family.

The chain is UPF0342 protein BCE_0953 from Bacillus cereus (strain ATCC 10987 / NRS 248).